We begin with the raw amino-acid sequence, 134 residues long: Small ribosomal subunit protein uS8c (134 aa).

It belongs to the universal ribosomal protein uS8 family. In terms of assembly, part of the 30S ribosomal subunit.

The protein resides in the plastid. Its subcellular location is the chloroplast. One of the primary rRNA binding proteins, it binds directly to 16S rRNA central domain where it helps coordinate assembly of the platform of the 30S subunit. The protein is Small ribosomal subunit protein uS8c (rps8) of Aethionema cordifolium (Lebanon stonecress).